A 585-amino-acid chain; its full sequence is MRKTKIVCTIGPASESEEMLEKLMNAGMNVARLNFSHGSHEEHKARIDTIRKVAKRLNKTIGLLLDTKGPEIRTHNMKDGLIVLEKGKEVIVSMNEVEGTPEKFSVTYENLINDVNIGSYILLDDGLVELQVKEINKDKGEVKCDILNTGELKNKKGVNLPGVKVNLPGITDKDADDIRFGIKENVDFIAASFVRRPSDVLDIRQILEEEKAEITIFPKIENQEGIDNIEEILEVSDGLMVARGDMGVEIPPESVPMVQKDLIRKCNKLGKPVITATQMLDSMQRNPRATRAEASDVANAIYDGTDAVMLSGETAAGQYPEEAVKTMRNIAVSAEAAQDYKKLLSDRTKLVETSLVNAIGVSVAHTALNLNVKAIVAATESGSTARTISKYRPHSDIIAVTPSEKTARQCAIVWGVNPVVKEGRKTTDALLNNAVATAVETGRVSNGDLIIITAGVPTGEKGTTNMMKIHLVGDEIAKGQGVGRGSVVGHAIVADSASDLEGKDLSDKVIITNSVDETLVPYVEKAIGLITEENGITSPSAIIGLEKGIPTVVGVEQATKEIKNDMLVTLDASQGKVFEGYANVL.

Residue R32 coordinates substrate. K(+) is bound by residues N34, S36, D66, and T67. 34 to 37 (NFSH) lines the ATP pocket. ATP-binding residues include R73 and K156. Residue E221 participates in Mg(2+) binding. Residues G244, D245, and T277 each coordinate substrate. Position 245 (D245) interacts with Mg(2+).

This sequence belongs to the pyruvate kinase family. In the C-terminal section; belongs to the PEP-utilizing enzyme family. Requires Mg(2+) as cofactor. The cofactor is K(+).

It catalyses the reaction pyruvate + ATP = phosphoenolpyruvate + ADP + H(+). The protein operates within carbohydrate degradation; glycolysis; pyruvate from D-glyceraldehyde 3-phosphate: step 5/5. The protein is Pyruvate kinase (pyk) of Staphylococcus epidermidis (strain ATCC 35984 / DSM 28319 / BCRC 17069 / CCUG 31568 / BM 3577 / RP62A).